The following is a 225-amino-acid chain: MAKQRPATLSVYLYIPNIVGYMRVLLNCIAFSVCFSNKTLFSLLYFFSFCCDAVDGWCARKFNQVSTFGAVLDMVTDRVSTACLLVILSQIYRPSLVFLSLLALDIASHWLQMYSTFLSGKTSHKDVKDSTSWLFRLYYGNRMFMGYCCVSCEVLYIILLLIATNQTENLMNVVVKSLMQISPLSLLLALSIFGWSIKQIINVIQMKTAADVCVLYDIEKQHKKP.

A run of 2 helical transmembrane segments spans residues 6–26 (PATL…RVLL) and 29–49 (IAFS…FFSF). Positions 52 and 55 each coordinate Mg(2+). A CDP-1,2-diacyl-sn-glycerol contacts are provided by Gly-56, Arg-60, and Ser-66. Mg(2+)-binding residues include Asp-73 and Asp-77. Residue Asp-77 is the Proton acceptor of the active site. The next 3 membrane-spanning stretches (helical) occupy residues 84–104 (LLVI…LLAL), 143–163 (MFMG…LLIA), and 184–204 (LSLL…INVI).

The protein belongs to the CDP-alcohol phosphatidyltransferase class-I family. Mg(2+) is required as a cofactor. The cofactor is Mn(2+).

It is found in the membrane. The catalysed reaction is a CDP-1,2-diacyl-sn-glycerol + myo-inositol = a 1,2-diacyl-sn-glycero-3-phospho-(1D-myo-inositol) + CMP + H(+). Its function is as follows. Catalyzes the biosynthesis of phosphatidylinositol (PtdIns) as well as PtdIns:inositol exchange reaction. May thus act to reduce an excessive cellular PtdIns content. The exchange activity is due to the reverse reaction of PtdIns synthase and is dependent on CMP, which is tightly bound to the enzyme. The sequence is that of Probable CDP-diacylglycerol--inositol 3-phosphatidyltransferase 2 (PIS2) from Arabidopsis thaliana (Mouse-ear cress).